The primary structure comprises 261 residues: Chanoclavine-I dehydrogenase ifgE (261 aa).

The signal sequence occupies residues 1–20 (MASVKSRVFAITGGASGIGA). NADP(+) contacts are provided by Ile-18, Lys-48, Asp-66, Arg-132, Tyr-166, Lys-170, and Thr-201. Tyr-166 acts as the Proton acceptor in catalysis. Lys-170 acts as the Lowers pKa of active site Tyr in catalysis.

It belongs to the short-chain dehydrogenases/reductases (SDR) family.

It participates in alkaloid biosynthesis; ergot alkaloid biosynthesis. Chanoclavine-I dehydrogenase; part of the gene cluster that mediates the biosynthesis of isofumigaclavines, fungal ergot alkaloids. The tryptophan dimethylallyltransferase ifgA catalyzes the first step of ergot alkaloid biosynthesis by condensing dimethylallyl diphosphate (DMAP) and tryptophan to form 4-dimethylallyl-L-tryptophan. The second step is catalyzed by the methyltransferase ifgB that methylates 4-dimethylallyl-L-tryptophan in the presence of S-adenosyl-L-methionine, resulting in the formation of N-methyl-dimethylallyl-L-tryptophan. The catalase ifgD and the FAD-dependent oxidoreductase ifgC then transform N-methyl-dimethylallyl-L-tryptophan to chanoclavine-I which is further oxidized by ifgE in the presence of NAD(+), resulting in the formation of chanoclavine-I aldehyde. The chanoclavine-I aldehyde reductases ifgG and/or fgaOx3 reduce chanoclavine-I aldehyde to dihydrochanoclavine-I aldehyde that spontaneously dehydrates to form 6,8-dimethyl-6,7-didehydroergoline. The festuclavine dehydrogenases ifgF1 and/or ifgF2 then catalyze the reduction of 6,8-dimethyl-6,7-didehydroergoline to form festuclavine. Hydrolysis of festuclavine by a yet undetermined cytochrome P450 monooxygenase (called ifgH) then leads to the formation of isofumigaclavine B which is in turn acetylated by ifgI to isofumigaclavine A. Penicillium roqueforti has interestingly at least two sets of genes for the consumption of chanoclavine-I aldehyde on three different loci, the OYEs ifgG/fgaOx3 and the festuclavine synthase homologs ifgF1/ifgF2. The reason for the duplication of these genes is unclear, probably to ensure the conversion of chanoclavine-I aldehyde by differential gene expression under various environmental conditions. The polypeptide is Chanoclavine-I dehydrogenase ifgE (Penicillium roqueforti (strain FM164)).